Here is a 94-residue protein sequence, read N- to C-terminus: uncharacterized protein (94 aa).

The disordered stretch occupies residues 1–23; it reads MVLLAGTRPQGGEARCMIPPPPS.

This is an uncharacterized protein from Homo sapiens (Human).